Reading from the N-terminus, the 263-residue chain is 3'-5' ssDNA/RNA exonuclease TatD (263 aa).

E91, H127, and H152 together coordinate a divalent metal cation.

The protein belongs to the metallo-dependent hydrolases superfamily. TatD-type hydrolase family. TatD subfamily. As to quaternary structure, monomer. The cofactor is Mg(2+).

It is found in the cytoplasm. Functionally, 3'-5' exonuclease that prefers single-stranded DNA and RNA. May play a role in the H(2)O(2)-induced DNA damage repair. This is 3'-5' ssDNA/RNA exonuclease TatD from Klebsiella pneumoniae (strain 342).